The sequence spans 325 residues: Melanocortin receptor 5 (325 aa).

Residues 1 to 37 (MNSSFHLHFLDLNLNATEGNLSGPNVKNKSSPCEDMG) are Extracellular-facing. Asn2, Asn15, Asn20, and Asn28 each carry an N-linked (GlcNAc...) asparagine glycan. Residues 38-61 (IAVEVFLTLGVISLLENILVIGAI) form a helical membrane-spanning segment. The Cytoplasmic portion of the chain corresponds to 62–73 (VKNKNLHSPMYF). The chain crosses the membrane as a helical span at residues 74 to 97 (FVCSLAVADMLVSMSSAWETITIY). The Extracellular portion of the chain corresponds to 98–114 (LLNNKHLVIADAFVRHI). A helical transmembrane segment spans residues 115–138 (DNVFDSMICISVVASMCSLLAIAV). At 139–155 (DRYVTIFYALRYHHIMT) the chain is on the cytoplasmic side. The helical transmembrane segment at 156–179 (ARRSGAIIAGIWAFCTGCGIVFIL) threads the bilayer. Topologically, residues 180–186 (YSESTYV) are extracellular. Residues 187–211 (ILCLISMFFAMLFLLVSLYIHMFLL) form a helical membrane-spanning segment. The Cytoplasmic portion of the chain corresponds to 212–239 (ARTHVKRIAALPGASSARQRTSMQGAVT). A helical membrane pass occupies residues 240 to 265 (VTMLLGVFTVCWAPFFLHLTLMLSCP). Residues 266–273 (QNLYCSRF) lie on the Extracellular side of the membrane. Residues 274–297 (MSHFNMYLILIMCNSVMDPLIYAF) form a helical membrane-spanning segment. The Cytoplasmic segment spans residues 298–325 (RSQEMRKTFKEIICCRGFRIACSFPRRD). S-palmitoyl cysteine attachment occurs at residues Cys311 and Cys312.

Belongs to the G-protein coupled receptor 1 family. Expressed in the brain but not in the melanoma cells.

It localises to the cell membrane. Its function is as follows. Receptor for MSH (alpha, beta and gamma) and ACTH. The activity of this receptor is mediated by G proteins which activate adenylate cyclase. This receptor is a possible mediator of the immunomodulation properties of melanocortins. This is Melanocortin receptor 5 (MC5R) from Homo sapiens (Human).